The primary structure comprises 309 residues: ADP-L-glycero-D-manno-heptose-6-epimerase (309 aa).

NADP(+)-binding positions include 10–11 (FI), 31–32 (DN), lysine 38, lysine 53, 75–79 (EGACS), and asparagine 92. Tyrosine 140 (proton acceptor) is an active-site residue. Lysine 144 serves as a coordination point for NADP(+). Asparagine 169 contributes to the substrate binding site. 2 residues coordinate NADP(+): valine 170 and lysine 178. The Proton acceptor role is filled by lysine 178. Residues serine 180, histidine 187, 201–204 (FEGS), arginine 209, and tyrosine 272 contribute to the substrate site.

Belongs to the NAD(P)-dependent epimerase/dehydratase family. HldD subfamily. As to quaternary structure, homopentamer. Requires NADP(+) as cofactor.

The enzyme catalyses ADP-D-glycero-beta-D-manno-heptose = ADP-L-glycero-beta-D-manno-heptose. Its pathway is nucleotide-sugar biosynthesis; ADP-L-glycero-beta-D-manno-heptose biosynthesis; ADP-L-glycero-beta-D-manno-heptose from D-glycero-beta-D-manno-heptose 7-phosphate: step 4/4. Functionally, catalyzes the interconversion between ADP-D-glycero-beta-D-manno-heptose and ADP-L-glycero-beta-D-manno-heptose via an epimerization at carbon 6 of the heptose. The sequence is that of ADP-L-glycero-D-manno-heptose-6-epimerase from Enterobacter sp. (strain 638).